Here is a 347-residue protein sequence, read N- to C-terminus: Phosphoribosylformylglycinamidine cyclo-ligase (347 aa).

Belongs to the AIR synthase family.

Its subcellular location is the cytoplasm. It catalyses the reaction 2-formamido-N(1)-(5-O-phospho-beta-D-ribosyl)acetamidine + ATP = 5-amino-1-(5-phospho-beta-D-ribosyl)imidazole + ADP + phosphate + H(+). It functions in the pathway purine metabolism; IMP biosynthesis via de novo pathway; 5-amino-1-(5-phospho-D-ribosyl)imidazole from N(2)-formyl-N(1)-(5-phospho-D-ribosyl)glycinamide: step 2/2. This chain is Phosphoribosylformylglycinamidine cyclo-ligase, found in Bacillus cytotoxicus (strain DSM 22905 / CIP 110041 / 391-98 / NVH 391-98).